A 147-amino-acid polypeptide reads, in one-letter code: Hemoglobin subunit delta (147 aa).

An N-acetylalanine; in variant Niigata modification is found at Val2. The Globin domain occupies 3-147 (HLTPEEKTAV…VANALAHKYH (145 aa)). At Ser51 the chain carries Phosphoserine. His64 and His93 together coordinate heme b.

This sequence belongs to the globin family. As to quaternary structure, heterotetramer of two alpha chains and two delta chains in adult hemoglobin A2 (HbA2). HbA2 represents less than 3.5% of adult hemoglobin. Red blood cells.

Its function is as follows. Involved in oxygen transport from the lung to the various peripheral tissues. This Homo sapiens (Human) protein is Hemoglobin subunit delta (HBD).